The following is a 194-amino-acid chain: GTP cyclohydrolase 1 (194 aa).

Positions 83, 86, and 155 each coordinate Zn(2+).

Belongs to the GTP cyclohydrolase I family. In terms of assembly, homomer.

The catalysed reaction is GTP + H2O = 7,8-dihydroneopterin 3'-triphosphate + formate + H(+). It functions in the pathway cofactor biosynthesis; 7,8-dihydroneopterin triphosphate biosynthesis; 7,8-dihydroneopterin triphosphate from GTP: step 1/1. The chain is GTP cyclohydrolase 1 from Streptococcus pyogenes serotype M49 (strain NZ131).